A 271-amino-acid chain; its full sequence is Ribosome-recycling factor, chloroplastic (271 aa).

Residues 1-78 (MAASSLSSAT…LQNRAGTFRC (78 aa)) constitute a chloroplast transit peptide. Residues 213-260 (AVRNIRRDALKSYEKLEKEKKLSEDNVKDLSADLQKLTDEYMKKVESI) are a coiled coil.

The protein belongs to the RRF family. Modeling onto the 70S ribosome suggests it binds to PSRP1. As to expression, restricted to photosynthetic tissues.

Its subcellular location is the plastid. The protein localises to the chloroplast stroma. In terms of biological role, responsible for the release of ribosomes from messenger RNA at the termination of chloroplastic protein biosynthesis. This is Ribosome-recycling factor, chloroplastic (RRF) from Spinacia oleracea (Spinach).